The primary structure comprises 693 residues: Putative adenosylcobalamin-dependent ribonucleoside-triphosphate reductase (693 aa).

A disulfide bond links C90 and C386. Residues C375 and E377 contribute to the active site.

It belongs to the class II ribonucleoside-triphosphate reductase family. Requires adenosylcob(III)alamin as cofactor.

It catalyses the reaction a 2'-deoxyribonucleoside 5'-triphosphate + [thioredoxin]-disulfide + H2O = a ribonucleoside 5'-triphosphate + [thioredoxin]-dithiol. The protein is Putative adenosylcobalamin-dependent ribonucleoside-triphosphate reductase (50) of Mycobacterium phage D29 (Mycobacteriophage D29).